The primary structure comprises 424 residues: Serine/threonine-protein kinase H1 (424 aa).

The N-myristoyl glycine moiety is linked to residue Gly2. Cys3 is lipidated: S-palmitoyl cysteine. The disordered stretch occupies residues 56–80 (SQYAHPCPGPPTAGHTEPPSEPPRR). The Protein kinase domain occupies 98–355 (YDIKALIGRG…ALQALRHPWV (258 aa)). Residues 104–112 (IGRGSFSRV) and Lys127 contribute to the ATP site. Asp218 functions as the Proton acceptor in the catalytic mechanism. A disordered region spans residues 378–407 (RASSRCQSTKSAQSTRSSRSTRSNKSRRVR). Ser380 and Ser381 each carry phosphoserine; by autocatalysis. Low complexity predominate over residues 385-398 (STKSAQSTRSSRST).

This sequence belongs to the protein kinase superfamily. CAMK Ser/Thr protein kinase family. Homodimer. Post-translationally, autophosphorylated on serine residues. Myristoylated. Required for membrane association. Prerequisite for palmitoylation to occur. In terms of processing, palmitoylated. Expressed in all tissues and cell lines tested with the highest level of abundance in testis.

The protein resides in the golgi apparatus. Its subcellular location is the cytoplasm. The protein localises to the cytoskeleton. It localises to the microtubule organizing center. It is found in the centrosome. The protein resides in the nucleus speckle. Its subcellular location is the endoplasmic reticulum membrane. The protein localises to the cell membrane. It carries out the reaction L-seryl-[protein] + ATP = O-phospho-L-seryl-[protein] + ADP + H(+). The catalysed reaction is L-threonyl-[protein] + ATP = O-phospho-L-threonyl-[protein] + ADP + H(+). Its activity is regulated as follows. Activity depends on Ca(2+) concentration. Functionally, serine/threonine protein kinase that may be involved in the regulation of pre-mRNA processing. It may phosphorylate components of nuclear splice factor compartments (SFC), such as non-snRNP splicing factors containing a serine/arginine-rich domain (SR proteins). Reversible phosphorylation of SR proteins may cause their release into the nucleoplasm and change their local concentration, thereby influencing alternative splicing. The chain is Serine/threonine-protein kinase H1 (PSKH1) from Homo sapiens (Human).